The following is a 415-amino-acid chain: Casein kinase I isoform delta (415 aa).

The region spanning 9 to 277 (YRLGRKIGSG…YLRQLFRNLF (269 aa)) is the Protein kinase domain. ATP-binding positions include 15–23 (IGSGSFGDI) and lysine 38. The active-site Proton acceptor is the aspartate 128. Positions 278–364 (HRQGFSYDYV…TSPRPVSGME (87 aa)) are centrosomal localization signal (CLS). The segment covering 301–315 (ADDAERERRDREERL) has biased composition (basic and acidic residues). Residues 301-415 (ADDAERERRD…SSGLQSVVHR (115 aa)) are disordered. Positions 317 to 342 (HSRNPATRGLPSTASGRLRGTQEVAP) are autoinhibitory. Phosphoserine is present on residues serine 328 and serine 331. Residues 347–358 (TPTSHTANTSPR) are compositionally biased toward polar residues. Serine 370 carries the post-translational modification Phosphoserine. Arginine 375 is subject to Omega-N-methylarginine. The segment covering 380 to 400 (NISSSDLTGRQDTSRMSTSQI) has biased composition (polar residues). Serine 382, serine 383, serine 384, serine 407, and serine 411 each carry phosphoserine.

Belongs to the protein kinase superfamily. CK1 Ser/Thr protein kinase family. Casein kinase I subfamily. In terms of assembly, monomer. Component of the circadian core oscillator, which includes the CRY proteins, CLOCK, or NPAS2, ARTNL/BMAL1 or ARTNL2/BMAL2, CSNK1D and/or CSNK1E, TIMELESS and the PER proteins. Interacts with DNMT1 and MAP1A. Interacts directly with PER1 and PER2 which may lead to their degradation. Interacts with MAPT/TAU, SNAPIN, DBNDD2, AIB1/NCOA3 and ESR1. Interacts with AKAP9/AKAP450; this interaction promotes centrosomal subcellular location. Binds to tubulins in mitotic cells upon DNA damage. Interacts with GJA1. Interacts with DDX3X; this interaction enhances CSNK1D kinase activity in vitro, but it is unclear whether this interaction is physiologically relevant. Interacts with FAM83A, FAM83B, FAM83E and FAM83H (via DUF1669). Autophosphorylated on serine and threonine residues; this autophosphorylation represses activity. Reactivated by phosphatase-mediated dephosphorylation. May be dephosphorylated by PP1.

The protein resides in the cytoplasm. It is found in the nucleus. The protein localises to the cytoskeleton. It localises to the microtubule organizing center. Its subcellular location is the centrosome. The protein resides in the perinuclear region. It is found in the cell membrane. The protein localises to the spindle. It localises to the golgi apparatus. The catalysed reaction is L-seryl-[protein] + ATP = O-phospho-L-seryl-[protein] + ADP + H(+). It carries out the reaction L-threonyl-[protein] + ATP = O-phospho-L-threonyl-[protein] + ADP + H(+). The enzyme catalyses L-seryl-[tau protein] + ATP = O-phospho-L-seryl-[tau protein] + ADP + H(+). It catalyses the reaction L-threonyl-[tau protein] + ATP = O-phospho-L-threonyl-[tau protein] + ADP + H(+). With respect to regulation, exhibits substrate-dependent heparin activation. Drug-mediated inhibition leads to a delay of the oscillations with the magnitude of this effect dependent upon the timing of drug administration. Inhibited by phosphorylation. Its function is as follows. Essential serine/threonine-protein kinase that regulates diverse cellular growth and survival processes including Wnt signaling, DNA repair and circadian rhythms. It can phosphorylate a large number of proteins. Casein kinases are operationally defined by their preferential utilization of acidic proteins such as caseins as substrates. Phosphorylates connexin-43/GJA1, MAP1A, SNAPIN, MAPT/TAU, TOP2A, DCK, HIF1A, EIF6, p53/TP53, DVL2, DVL3, ESR1, AIB1/NCOA3, DNMT1, PKD2, YAP1, PER1 and PER2. Central component of the circadian clock. In balance with PP1, determines the circadian period length through the regulation of the speed and rhythmicity of PER1 and PER2 phosphorylation. Controls PER1 and PER2 nuclear transport and degradation. YAP1 phosphorylation promotes its SCF(beta-TRCP) E3 ubiquitin ligase-mediated ubiquitination and subsequent degradation. DNMT1 phosphorylation reduces its DNA-binding activity. Phosphorylation of ESR1 and AIB1/NCOA3 stimulates their activity and coactivation. Phosphorylation of DVL2 and DVL3 regulates WNT3A signaling pathway that controls neurite outgrowth. Phosphorylates NEDD9/HEF1. EIF6 phosphorylation promotes its nuclear export. Triggers down-regulation of dopamine receptors in the forebrain. Activates DCK in vitro by phosphorylation. TOP2A phosphorylation favors DNA cleavable complex formation. May regulate the formation of the mitotic spindle apparatus in extravillous trophoblast. Modulates connexin-43/GJA1 gap junction assembly by phosphorylation. Probably involved in lymphocyte physiology. Regulates fast synaptic transmission mediated by glutamate. This is Casein kinase I isoform delta (CSNK1D) from Pongo abelii (Sumatran orangutan).